Reading from the N-terminus, the 99-residue chain is DNA-binding protein Fis (99 aa).

Positions 1-25 are disordered; that stretch reads MFEQKISSEALTTTTSIPATGQITQ. The segment at residues 75 to 94 is a DNA-binding region (H-T-H motif); that stretch reads QTRAATMLGINRGTLRKKLK.

Belongs to the transcriptional regulatory Fis family. As to quaternary structure, homodimer.

Functionally, activates ribosomal RNA transcription. Plays a direct role in upstream activation of rRNA promoters. In Psychromonas ingrahamii (strain DSM 17664 / CCUG 51855 / 37), this protein is DNA-binding protein Fis.